The sequence spans 442 residues: DNA topoisomerase medium subunit (442 aa).

Residues isoleucine 29–leucine 438 form the Topo IIA-type catalytic domain. The O-(5'-phospho-DNA)-tyrosine intermediate role is filled by tyrosine 117.

It belongs to the type II topoisomerase family. In terms of assembly, part of the DNA topoisomerase complex made of gp39, gp52 and gp60. It depends on Mg(2+) as a cofactor.

It carries out the reaction ATP-dependent breakage, passage and rejoining of double-stranded DNA.. Medium subunit of the DNA topoisomerase that untwists superhelical DNA. Controls topological states of double-stranded DNA by transient breakage and subsequent rejoining of DNA strands. In Enterobacteria phage T4 (Bacteriophage T4), this protein is DNA topoisomerase medium subunit (52).